A 531-amino-acid polypeptide reads, in one-letter code: Fe-S cluster assembly factor HCF101, chloroplastic (531 aa).

The N-terminal 62 residues, 1–62 (MRNLRAAAPA…PRRVGRLRRR (62 aa)), are a transit peptide targeting the chloroplast. Over residues 17–27 (APPLLLPPSTP) the composition is skewed to pro residues. Positions 17–37 (APPLLLPPSTPTPRGAFSAKA) are disordered. Residues 28-37 (TPRGAFSAKA) show a composition bias toward low complexity. 181 to 188 (CKGGVGKS) provides a ligand contact to ATP.

Belongs to the Mrp/NBP35 ATP-binding proteins family. Requires [4Fe-4S] cluster as cofactor.

The protein resides in the plastid. It localises to the chloroplast stroma. Required for photosystem I (PSI) biosynthesis and assembly. May serve as a chloroplast scaffold protein that specifically assembles iron-sulfur (4Fe-4S) clusters and transfers them to the chloroplast PSI and ferredoxin-thioredoxin (FTR) complexes. Probably not required for assembly or stability of plastidic 2Fe-2S clusters. In Oryza sativa subsp. japonica (Rice), this protein is Fe-S cluster assembly factor HCF101, chloroplastic (HCF101).